We begin with the raw amino-acid sequence, 274 residues long: MDRYSRRNLEDLVVPNYQETSDSYPSPDMWGTGWSMNSSEAAEKCFDYDVIHNGFSGGLYSQMEMDMGTSEQVEEETKKLKASGCFDRSLHDFDEIQHMDDMFLSSILEDVPGNENFLSFKESDNNNSSSSSYLDTTDGREVPLFHYNWETCQDMPLMEEDAPMNLCEENKEEASAEEVVLQDLQRATEMLTDDTRKCFRDTFYRLAKNSQQKSDSNSDEFLEDRTRETEFETKLNRQSRGQSHIQQDGIQHEKYASTEETFFCSRIREFHHIW.

A disordered region spans residues 209–249 (NSQQKSDSNSDEFLEDRTRETEFETKLNRQSRGQSHIQQDG). Residues 223 to 235 (EDRTRETEFETKL) are compositionally biased toward basic and acidic residues. Residues 236–249 (NRQSRGQSHIQQDG) show a composition bias toward polar residues.

Interacts with REV8.

Functionally, probable transcriptional coactivator. In Arabidopsis thaliana (Mouse-ear cress), this protein is Protein LNK4.